Reading from the N-terminus, the 102-residue chain is MQKARIRLTGTDFNKVEMVCDKIREIAERTGVNLAGPIPLPTKRLVVPIRKSPDGEGTATWDRWQMRVHKRLIDIDADERALRQLMRIQVPKDIGIEIVLES.

This sequence belongs to the universal ribosomal protein uS10 family. Part of the 30S ribosomal subunit.

Involved in the binding of tRNA to the ribosomes. This Methanosphaerula palustris (strain ATCC BAA-1556 / DSM 19958 / E1-9c) protein is Small ribosomal subunit protein uS10.